Consider the following 211-residue polypeptide: Large ribosomal subunit protein bL25 (211 aa).

Disordered stretches follow at residues 1–23 and 191–211; these read MAGEIPDLVAEPRAGTGKGAARQ and LRSADNEADEEETEEATAEEV. The segment covering 196 to 211 has biased composition (acidic residues); it reads NEADEEETEEATAEEV.

This sequence belongs to the bacterial ribosomal protein bL25 family. CTC subfamily. As to quaternary structure, part of the 50S ribosomal subunit; part of the 5S rRNA/L5/L18/L25 subcomplex. Contacts the 5S rRNA. Binds to the 5S rRNA independently of L5 and L18.

This is one of the proteins that binds to the 5S RNA in the ribosome where it forms part of the central protuberance. This chain is Large ribosomal subunit protein bL25, found in Dinoroseobacter shibae (strain DSM 16493 / NCIMB 14021 / DFL 12).